A 260-amino-acid polypeptide reads, in one-letter code: Salicylic acid-binding protein 2 (260 aa).

Salicylate is bound by residues alanine 13, serine 81, and lysine 159. Catalysis depends on serine 81, which acts as the Acyl-ester intermediate. Active-site charge relay system residues include aspartate 210 and histidine 238. Salicylate-binding residues include histidine 238, leucine 253, and histidine 257.

This sequence belongs to the AB hydrolase superfamily. Methylesterase family.

It catalyses the reaction methyl salicylate + H2O = salicylate + methanol + H(+). Its pathway is plant hormone biosynthesis. With respect to regulation, esterase activity is down-regulated by salicylic acid (SA) or by tetraFA, a synthetic SA analog. In terms of biological role, required to convert methyl salicylate (MeSA) to salicylic acid (SA) as part of the signal transduction pathways that activate systemic acquired resistance in systemic tissue. MeSA is believed to be an inactive form that needs to be demethylated to exert a biological effect. Also able to catalyze the conversion of acibenzolar-S-methyl into acibenzolar to induce systemic acquired resistance. The sequence is that of Salicylic acid-binding protein 2 from Nicotiana tabacum (Common tobacco).